A 983-amino-acid polypeptide reads, in one-letter code: MSRATAVSRLARAARAAAAARRHHAGGRDPLRALASLAGDASASAGGGARRPAWFAPPMGRLGGGGLLVPPPPPQRRLFHPTQAARYSTSSSSQITPGEFTEMAWEGVVGAVDAARMSKQQVVEAEHLMKALLEQKDGLARRIFSKAGIDNTSVLQATDEFISRQPKVVGDTSGPIIGSSFVSILDNARKHKKEYADEFVSVEHILRAFTEDKRFGQQLFRDLKIGENELKEAISAVRGSQRVTDQNPEGKYQALEKYGIDMTELARRGKLDPVIGRDDEVRRCIQILCRRTKNNPVIIGEPGVGKTAIAEGLAQRIVRGDVPEPLQNRKLISLDMGALLAGAKFQGQFEERLKAVLKEITASNGQIILFIDEIHTIVGAGAAGGAMDAGNLLKPMLGRGELRCIGATTLDEYRKYIEKDAALERRFQQVYCGEPAVEDTISILRGLRERYELHHGVKISDGALVSAAVLSDRYITGRFLPDKAIDLVDEAAAKLKMEITSKPIELDEVDREIIRLEMEKLSLKNDTDKASKQRLSKLEADLESLKQKQKNLSEHWEYEKSLMTRIRSIKEETDRVNLEIEAAEREYDLNRAAELKYGTLLSLQKQLEEAENKLMEFQQSGKSMLREEVTDVDIAEIVSKWTGIPVSNLQQSEKEKLLLLEDVLHKRVIGQDIAVKSVANAIRRSRAGLSDPNRPIASLMFMGPTGVGKTELGKTLAEFLFNTENALIRIDMSEYMEKHAVSRLVGAPPGYIGYGEGGQLTEAVRRRPYSVVLFDEIEKAHQDVFNILLQLLDDGRITDSQGRTVSFTNCVIIMTSNIGSPLILDTLRNTSDSKEAVYEIMKKQVIDMARQSFRPEFLNRIDEYIVFQPLDTTEINRIVEIQLNRVKNRLRQQKIHLQYTPEAVEHLGSLGFDPNYGARPVKRVIQQMVENEIALSVLKGDFKEDDTVLVDVSSVAIAKGLAPQKKLVLQRLENANLELVAND.

The N-terminal 87 residues, Met-1–Tyr-87, are a transit peptide targeting the mitochondrion. Positions Pro-97–Ser-240 constitute a Clp R domain. Repeat regions lie at residues Phe-100 to Gln-165 and Ile-177 to Ser-240. Positions Leu-255–Pro-503 are i. Gly-300–Thr-307 is an ATP binding site. Positions Ile-504–Glu-627 form a coiled coil. An II region spans residues Val-629 to Ser-820. Position 703 to 710 (Gly-703 to Thr-710) interacts with ATP.

This sequence belongs to the ClpA/ClpB family.

Its subcellular location is the mitochondrion. In terms of biological role, molecular chaperone that may not be involved in heat stress response or tolerance. The sequence is that of Chaperone protein ClpB3, mitochondrial (CLPB3) from Oryza sativa subsp. japonica (Rice).